The chain runs to 1485 residues: ABC multidrug transporter I (1485 aa).

Disordered regions lie at residues 1–57 and 75–111; these read MDEK…EEFS and KQIS…ALRG. Residues 8–24 show a composition bias toward polar residues; it reads SESSNGSDVDSLSTASA. N-linked (GlcNAc...) asparagine glycosylation occurs at Asn-12. The segment covering 85 to 95 has biased composition (basic and acidic residues); it reads GKTEDVERSDS. 3 N-linked (GlcNAc...) asparagine glycosylation sites follow: Asn-132, Asn-335, and Asn-451. One can recognise an ABC transporter 1 domain in the interval 163 to 411; sequence MHMLGYGKKG…FESLGFKERP (249 aa). 7 helical membrane-spanning segments follow: residues 522–542, 556–576, 600–620, 623–643, 664–684, 691–711, and 774–794; these read FAQT…GTVW, GGLL…ELVS, IAQI…FSII, FMCG…IIVL, YAMK…GYLI, EWLR…ALMV, and FGIM…HGET. An ABC transporter 2 domain is found at 846–1089; it reads FTWEDVCYDV…LLDYFRRNGA (244 aa). Residue 882 to 889 participates in ATP binding; it reads GASGAGKT. 5 helical membrane-spanning segments follow: residues 1184–1204, 1211–1231, 1268–1288, 1299–1319, and 1325–1345; these read YGFT…LAFL, ASLQ…AIIL, LPYS…IPGF, FLMV…ISAL, and IASQ…GVAI. 2 N-linked (GlcNAc...) asparagine glycosylation sites follow: Asn-1396 and Asn-1418. Residues 1449-1469 traverse the membrane as a helical segment; that stretch reads LGIFLAFIGSNLIILFLAVSF.

This sequence belongs to the ABC transporter superfamily. ABCG family. PDR (TC 3.A.1.205) subfamily.

It localises to the cell membrane. It carries out the reaction fluconazole(in) + ATP + H2O = fluconazole(out) + ADP + phosphate + H(+). The efflux inhibitor FK506 does not impair the transport activity. Its function is as follows. ABC efflux transporter that confers resistance to fluconazole (FLC) but shows no resistance to other azoles. Is also able to transport rhodamine 6G (R-6G), a known substrate for many ABC transporters. This chain is ABC multidrug transporter I, found in Aspergillus fumigatus (strain ATCC MYA-4609 / CBS 101355 / FGSC A1100 / Af293) (Neosartorya fumigata).